The sequence spans 185 residues: Potassium-transporting ATPase KdpC subunit (185 aa).

Residues 14-34 (ALSLLTGVAYPLALTGIAAVI) form a helical membrane-spanning segment. A disordered region spans residues 105–128 (AQNGAPAPVDAVTASGSGLDPHVS).

It belongs to the KdpC family. As to quaternary structure, the system is composed of three essential subunits: KdpA, KdpB and KdpC.

It is found in the cell inner membrane. Part of the high-affinity ATP-driven potassium transport (or Kdp) system, which catalyzes the hydrolysis of ATP coupled with the electrogenic transport of potassium into the cytoplasm. This subunit acts as a catalytic chaperone that increases the ATP-binding affinity of the ATP-hydrolyzing subunit KdpB by the formation of a transient KdpB/KdpC/ATP ternary complex. This Cereibacter sphaeroides (strain ATCC 17029 / ATH 2.4.9) (Rhodobacter sphaeroides) protein is Potassium-transporting ATPase KdpC subunit.